Consider the following 59-residue polypeptide: Large ribosomal subunit protein uL30 (59 aa).

It belongs to the universal ribosomal protein uL30 family. Part of the 50S ribosomal subunit.

The polypeptide is Large ribosomal subunit protein uL30 (Psychrobacter cryohalolentis (strain ATCC BAA-1226 / DSM 17306 / VKM B-2378 / K5)).